The sequence spans 241 residues: Glucosamine-6-phosphate deaminase (241 aa).

Catalysis depends on Asp67, which acts as the Proton acceptor; for enolization step. Asn136 acts as the For ring-opening step in catalysis. His138 (proton acceptor; for ring-opening step) is an active-site residue. Residue Glu143 is the For ring-opening step of the active site.

This sequence belongs to the glucosamine/galactosamine-6-phosphate isomerase family. NagB subfamily.

The enzyme catalyses alpha-D-glucosamine 6-phosphate + H2O = beta-D-fructose 6-phosphate + NH4(+). It functions in the pathway amino-sugar metabolism; N-acetylneuraminate degradation; D-fructose 6-phosphate from N-acetylneuraminate: step 5/5. Functionally, catalyzes the reversible isomerization-deamination of glucosamine 6-phosphate (GlcN6P) to form fructose 6-phosphate (Fru6P) and ammonium ion. The polypeptide is Glucosamine-6-phosphate deaminase (Alkaliphilus oremlandii (strain OhILAs) (Clostridium oremlandii (strain OhILAs))).